The chain runs to 526 residues: Non-reducing end alpha-L-arabinofuranosidase BoGH43A (526 aa).

The first 20 residues, 1–20, serve as a signal peptide directing secretion; sequence MRNALFLIFISLCSVCKSSA. Residue Asp-34 is the Proton acceptor of the active site. Glu-189 (proton donor) is an active-site residue.

The protein belongs to the glycosyl hydrolase 43 family.

It localises to the periplasm. It carries out the reaction Hydrolysis of terminal non-reducing alpha-L-arabinofuranoside residues in alpha-L-arabinosides.. The protein operates within glucan metabolism; xyloglucan degradation. Its function is as follows. Alpha-L-arabinofuranosidase involved in xyloglucan degradation by mediating the cleavage of terminal non-reducing alpha-L-arabinofuranoside residues in xyloglucan branches, converting the 'S' units to 'X' units. The protein is Non-reducing end alpha-L-arabinofuranosidase BoGH43A of Bacteroides ovatus (strain ATCC 8483 / DSM 1896 / JCM 5824 / BCRC 10623 / CCUG 4943 / NCTC 11153).